The sequence spans 184 residues: Inorganic pyrophosphatase (184 aa).

The substrate site is built by K19, R33, and Y45. Positions 55, 60, and 92 each coordinate Mg(2+). Y129 is a binding site for substrate.

Belongs to the PPase family. As to quaternary structure, homohexamer. Requires Mg(2+) as cofactor.

The protein localises to the cytoplasm. The enzyme catalyses diphosphate + H2O = 2 phosphate + H(+). Catalyzes the hydrolysis of inorganic pyrophosphate (PPi) forming two phosphate ions. The polypeptide is Inorganic pyrophosphatase (Mycoplasma genitalium (strain ATCC 33530 / DSM 19775 / NCTC 10195 / G37) (Mycoplasmoides genitalium)).